The sequence spans 223 residues: Ribonuclease T (223 aa).

Positions 20–194 constitute an Exonuclease domain; the sequence is VVIDVETAGF…YDTERTAELF (175 aa). Mg(2+) is bound by residues D23, E25, H181, and D186. H181 (proton donor/acceptor) is an active-site residue.

This sequence belongs to the RNase T family. In terms of assembly, homodimer. The cofactor is Mg(2+).

Functionally, trims short 3' overhangs of a variety of RNA species, leaving a one or two nucleotide 3' overhang. Responsible for the end-turnover of tRNA: specifically removes the terminal AMP residue from uncharged tRNA (tRNA-C-C-A). Also appears to be involved in tRNA biosynthesis. The sequence is that of Ribonuclease T from Shewanella baltica (strain OS185).